The following is a 62-amino-acid chain: uncharacterized protein (62 aa).

The interval 1–26 (MGELAASANHGHSPCYPERKGTPGDL) is disordered. Residues 17–26 (PERKGTPGDL) show a composition bias toward basic and acidic residues.

This is an uncharacterized protein from Homo sapiens (Human).